The primary structure comprises 168 residues: ADP-ribosylation factor-like protein 2-binding protein (168 aa).

Belongs to the ARL2BP family.

The protein localises to the cytoplasm. The protein resides in the mitochondrion intermembrane space. It is found in the cytoskeleton. It localises to the microtubule organizing center. Its subcellular location is the centrosome. The protein localises to the nucleus. The protein resides in the spindle. It is found in the cilium basal body. Its function is as follows. Plays a role as an effector of the ADP-ribosylation factor-like protein 2, ARL2. The polypeptide is ADP-ribosylation factor-like protein 2-binding protein (arl2bp) (Danio rerio (Zebrafish)).